The chain runs to 225 residues: Non-structural protein V (225 aa).

Over residues 145–157 the composition is skewed to polar residues; sequence SNEPVSSAGSAQD. Residues 145–173 form a disordered region; that stretch reads SNEPVSSAGSAQDPNFKRGGANRERARGN. Positions 174, 193, 197, 209, 211, 214, 218, and 221 each coordinate Zn(2+).

The protein belongs to the paramyxoviruses V protein family. As to quaternary structure, interacts with host IFIH1/MDA5 and DHX58/LGP2. Forms with host DDB1, CUL4A, STAT1 and STAT2 the HPIV2 virus V-dependent complex (VDC); this complex targets host STAT2 to proteasomal degradation.

The protein localises to the host nucleus. In terms of biological role, plays an essential role in the inhibition of host immune response. Prevents the establishment of cellular antiviral state by blocking interferon-alpha/beta (IFN-alpha/beta) production and signaling pathway. Interacts with host IFIH1/MDA5 and DHX58/LGP2 to inhibit the transduction pathway involved in the activation of IFN-beta promoter, thus protecting the virus against cell antiviral state. Efficiently blocks type I IFN signaling following infection by targeting host STAT2 for proteasomal degradation. Also plays a role in viral growth by promoting host RhoA-induced F-actin formation. The chain is Non-structural protein V (P/V) from Homo sapiens (Human).